The following is a 229-amino-acid chain: Predicted GPI-anchored protein 19 (229 aa).

The signal sequence occupies residues 1-20 (MFSTTSIVLWFTILLPVTLP). Positions 63-92 (DNEQVLRKSKKKKKTTSTGTPGNENTTDFA) are disordered. Positions 81 to 92 (GTPGNENTTDFA) are enriched in polar residues. Residues Asn-87, Asn-184, and Asn-189 are each glycosylated (N-linked (GlcNAc...) asparagine). A lipid anchor (GPI-anchor amidated glycine) is attached at Gly-208. The propeptide at 209 to 229 (FGSLIPYNSFYLYILLFCIIF) is removed in mature form.

Its subcellular location is the cell membrane. Predicted GPI-anchored protein which may have a role during host infection. This chain is Predicted GPI-anchored protein 19 (PGA19), found in Candida albicans (strain SC5314 / ATCC MYA-2876) (Yeast).